Here is a 2261-residue protein sequence, read N- to C-terminus: Phospholipid-transporting ATPase ABCA1 (2261 aa).

A lipid anchor (S-palmitoyl cysteine) is attached at Cys-3. N-linked (GlcNAc...) asparagine glycosylation occurs at Asn-14. A helical transmembrane segment spans residues 22-42 (TCQLLLEVAWPLFIFLILISV). A lipid anchor (S-palmitoyl cysteine) is attached at Cys-23. At 43–639 (RLSYPPYEQH…DIFLRVMSRS (597 aa)) the chain is on the extracellular side. The annulus domain 1 stretch occupies residues 69–80 (WVQGIICNANNP). An intrachain disulfide couples Cys-75 to Cys-309. N-linked (GlcNAc...) asparagine glycans are attached at residues Asn-98, Asn-151, Asn-161, Asn-196, Asn-244, Asn-292, Asn-337, and Asn-349. The interval 368 to 379 (SRIIWKALKPLL) is annulus domain 2. Residues Asn-400, Asn-478, Asn-489, and Asn-521 are each glycosylated (N-linked (GlcNAc...) asparagine). Residues 564–594 (ERTNKIKDGYWDPGPRADPFEDMRYVWGGFA) form a gateway domain region. The next 5 helical transmembrane spans lie at 640–660 (MPLF…KGIV), 683–703 (FSWF…LVVI), 716–736 (SVVF…CFLI), 745–765 (LAAA…VLCV), and 777–797 (IFAS…FALF). Residue Asn-820 is glycosylated (N-linked (GlcNAc...) asparagine). The chain crosses the membrane as a helical span at residues 827 to 847 (MMLFDTFLYGVMTWYIEAVFP). In terms of domain architecture, ABC transporter 1 spans 899-1131 (VSIQNLVKVY…LGTGYYLTLV (233 aa)). 933-940 (GHNGAGKT) serves as a coordination point for ATP. Residues 1041-1057 (LSVALAFVGGSKVVILD) form a helical membrane-spanning segment. Ser-1042 bears the Phosphoserine; by PKA mark. 2 S-palmitoyl cysteine lipidation sites follow: Cys-1110 and Cys-1111. Asn-1144 and Asn-1294 each carry an N-linked (GlcNAc...) asparagine glycan. Residues 1283-1312 (RPFTEDDAADPNDSDIDPESRETDLLSGMD) form a disordered region. Residues 1287–1299 (EDDAADPNDSDID) are compositionally biased toward acidic residues. A Phosphoserine modification is found at Ser-1296. Residues 1351–1371 (IVLPAVFVCIALVFSLIVPPF) form a helical membrane-spanning segment. Residues 1372 to 1656 (GKYPSLELQP…ALMTTSVDVL (285 aa)) are Extracellular-facing. N-linked (GlcNAc...) asparagine glycosylation is present at Asn-1453. A disulfide bond links Cys-1463 and Cys-1477. 2 N-linked (GlcNAc...) asparagine glycosylation sites follow: Asn-1504 and Asn-1637. The next 6 membrane-spanning stretches (helical) occupy residues 1657 to 1677 (VSIC…VFLI), 1703 to 1723 (FVWD…IFIC), 1735 to 1755 (LPVL…LMYP), 1768 to 1788 (VVLT…TFVL), 1802 to 1822 (ILKS…LIDM), and 1852 to 1872 (NLFA…LIQY). The region spanning 1912-2144 (LEIKELTKIY…FGDGYTIVVR (233 aa)) is the ABC transporter 2 domain. ATP is bound at residue 1946–1953 (GVNGAGKS). The N-linked (GlcNAc...) asparagine glycan is linked to Asn-2044. A Phosphoserine; by PKA modification is found at Ser-2054. An N-linked (GlcNAc...) asparagine glycan is attached at Asn-2238.

This sequence belongs to the ABC transporter superfamily. ABCA family. As to quaternary structure, interacts with MEGF10. May interact with APOE1; functionally associated with APOE1 in the biogenesis of HDLs. Interacts with ABCA8; this interaction potentiates cholesterol efflux. Interacts with ABCA12 and NR1H2; this interaction is required for ABCA1 localization to the cell surface and is necessary for its normal activity and stability. Post-translationally, phosphorylation on Ser-2054 regulates phospholipid efflux. In terms of processing, palmitoylated by ZDHHC8. Palmitoylation is essential for localization to the plasma membrane. Widely expressed, but most abundant in macrophages.

It is found in the cell membrane. It localises to the endosome. It carries out the reaction ATP + H2O + phospholipidSide 1 = ADP + phosphate + phospholipidSide 2.. The catalysed reaction is a 1,2-diacyl-sn-glycero-3-phosphocholine(out) + ATP + H2O = a 1,2-diacyl-sn-glycero-3-phosphocholine(in) + ADP + phosphate + H(+). The enzyme catalyses a 1,2-diacyl-sn-glycero-3-phospho-L-serine(out) + ATP + H2O = a 1,2-diacyl-sn-glycero-3-phospho-L-serine(in) + ADP + phosphate + H(+). It catalyses the reaction a sphingomyelin(in) + ATP + H2O = a sphingomyelin(out) + ADP + phosphate + H(+). It carries out the reaction cholesterol(in) + ATP + H2O = cholesterol(out) + ADP + phosphate + H(+). ATPase activity is decreased by cholesterol and ceramide. ATPase activity is stimulated by phosphatidylcholine and to a lesser degree by phosphatidylserine and sphingomyelin. Phospholipid translocase activity is highly reduced by berylium fluoride and aluminum flouride and reduced by N-ethylmaleimide. In terms of biological role, catalyzes the translocation of specific phospholipids from the cytoplasmic to the extracellular/lumenal leaflet of membrane coupled to the hydrolysis of ATP. Thereby, participates in phospholipid transfer to apolipoproteins to form nascent high density lipoproteins/HDLs. Transports preferentially phosphatidylcholine over phosphatidylserine. May play a similar role in the efflux of intracellular cholesterol to apolipoproteins and the formation of nascent high density lipoproteins/HDLs. Translocates phospholipids from the outer face of the plasma membrane and forces it through its gateway and annulus into an elongated hydrophobic tunnel in its extracellular domain. In Homo sapiens (Human), this protein is Phospholipid-transporting ATPase ABCA1.